The following is a 509-amino-acid chain: Scavenger receptor class B member 1 (509 aa).

Residues 1-11 (MGGSARARWVA) lie on the Cytoplasmic side of the membrane. Residues 12–32 (VGLGVVGLLCAVLGVVMILVM) traverse the membrane as a helical segment. Topologically, residues 33-440 (PSLIKQQVLK…YTQLVLMPQV (408 aa)) are extracellular. Residues Asn102, Asn108, Asn173, Asn212, Asn227, Asn255, Asn310, Asn330, and Asn383 are each glycosylated (N-linked (GlcNAc...) asparagine). An intrachain disulfide couples Cys251 to Cys384. The helical transmembrane segment at 441 to 461 (LQYVQYVLLGLGGLLLLVPVI) threads the bilayer. Over 462–509 (YQLRSQEKCFLFWSGSKKGSQDKEAIQAYSESLMSPAAKGTVLQEAKL) the chain is Cytoplasmic.

Belongs to the CD36 family. In terms of processing, N-glycosylated. The six cysteines of the extracellular domain are all involved in intramolecular disulfide bonds.

It is found in the cell membrane. Its subcellular location is the membrane. The protein resides in the caveola. Its function is as follows. Receptor for different ligands such as phospholipids, cholesterol ester, lipoproteins, phosphatidylserine and apoptotic cells. Receptor for HDL, mediating selective uptake of cholesteryl ether and HDL-dependent cholesterol efflux. Also facilitates the flux of free and esterified cholesterol between the cell surface and apoB-containing lipoproteins and modified lipoproteins, although less efficiently than HDL. May be involved in the phagocytosis of apoptotic cells, via its phosphatidylserine binding activity. The chain is Scavenger receptor class B member 1 (SCARB1) from Cricetulus griseus (Chinese hamster).